Reading from the N-terminus, the 439-residue chain is Sex-determination protein fem-3 (439 aa).

The tract at residues 21–45 is disordered; it reads RRLKRKANDDDDDDETVRERVDDAE.

As to quaternary structure, component of a complex containing fem-1, fem-2 and fem-3. Interacts with fem-1 and fem-2 (via N-terminus). Part of a E3 ubiquitin-protein ligase complex, at least composed of cul-2, elc-1, tra-1, fem-1, fem-2 and fem-3; mediates the ubiquitination and subsequent proteasomal degradation of tra-1. Interacts with tra-1. Interacts with sel-10. Interacts with tra-2.

Functionally, required for male development. In XO (male) animals, fem-3 directs male differentiation in all tissues. In XX (hermaphrodite) animals, it specifies the first 80 or so germ cells to be sperm. Negatively regulates male development when bound to tra-2. Together with fem-2 associates with the CBC(fem-1) E3 ubiquitin-protein ligase complex which mediates the ubiquitination and subsequent proteasomal degradation of tra-1. This Caenorhabditis remanei (Caenorhabditis vulgaris) protein is Sex-determination protein fem-3.